The primary structure comprises 285 residues: 4-diphosphocytidyl-2-C-methyl-D-erythritol kinase (285 aa).

Lysine 12 is a catalytic residue. Proline 94–serine 104 is an ATP binding site. Aspartate 136 is an active-site residue.

Belongs to the GHMP kinase family. IspE subfamily.

It catalyses the reaction 4-CDP-2-C-methyl-D-erythritol + ATP = 4-CDP-2-C-methyl-D-erythritol 2-phosphate + ADP + H(+). Its pathway is isoprenoid biosynthesis; isopentenyl diphosphate biosynthesis via DXP pathway; isopentenyl diphosphate from 1-deoxy-D-xylulose 5-phosphate: step 3/6. Catalyzes the phosphorylation of the position 2 hydroxy group of 4-diphosphocytidyl-2C-methyl-D-erythritol. This chain is 4-diphosphocytidyl-2-C-methyl-D-erythritol kinase, found in Paracidovorax citrulli (strain AAC00-1) (Acidovorax citrulli).